The sequence spans 283 residues: Pantothenate synthetase (283 aa).

Met30 to His37 is a binding site for ATP. Catalysis depends on His37, which acts as the Proton donor. Gln61 serves as a coordination point for (R)-pantoate. Gln61 contributes to the beta-alanine binding site. Gly149 to Asp152 provides a ligand contact to ATP. Position 155 (Gln155) interacts with (R)-pantoate. Leu186 to Arg189 contributes to the ATP binding site.

This sequence belongs to the pantothenate synthetase family. In terms of assembly, homodimer.

It is found in the cytoplasm. It catalyses the reaction (R)-pantoate + beta-alanine + ATP = (R)-pantothenate + AMP + diphosphate + H(+). The protein operates within cofactor biosynthesis; (R)-pantothenate biosynthesis; (R)-pantothenate from (R)-pantoate and beta-alanine: step 1/1. In terms of biological role, catalyzes the condensation of pantoate with beta-alanine in an ATP-dependent reaction via a pantoyl-adenylate intermediate. This chain is Pantothenate synthetase, found in Shigella dysenteriae serotype 1 (strain Sd197).